A 213-amino-acid chain; its full sequence is Glutathione S-transferase DHAR2 (213 aa).

Residue cysteine 6 is modified to S-glutathionyl cysteine. Glutathione is bound by residues lysine 8 and aspartate 19. Residues lysine 8 and aspartate 19 each coordinate L-ascorbate. One can recognise a GST N-terminal domain in the interval 10 to 83 (AVGAPDVLGD…DVIVGLLEEK (74 aa)). An S-glutathionyl cysteine modification is found at cysteine 20. Catalysis depends on cysteine 20, which acts as the Nucleophile. A Glutathione-binding motif is present at residues 20 to 25 (CPFSQR). Residues lysine 47, valine 60, serine 73, histidine 160, and tryptophan 207 each contribute to the glutathione site. One can recognise a GST C-terminal domain in the interval 84–213 (YPEPSLKTPP…VAGWESKVNA (130 aa)). Residue lysine 210 coordinates L-ascorbate.

Belongs to the GST superfamily. DHAR family. In terms of assembly, monomer. Post-translationally, spontaneous S-glutathionylation in the presence of oxidized glutathione (GSSG).

It is found in the cytoplasm. It localises to the cytosol. The enzyme catalyses RX + glutathione = an S-substituted glutathione + a halide anion + H(+). It carries out the reaction L-dehydroascorbate + 2 glutathione = glutathione disulfide + L-ascorbate. Displays a dual function. As a soluble protein, exhibits glutathione-dependent thiol transferase and dehydroascorbate (DHA) reductase activities. Exhibits glutathione-dependent thiol transferase and dehydroascorbate (DHA) reductase activities. Key component of the ascorbate recycling system. Involved in the redox homeostasis, especially in scavenging of ROS under oxidative stresses. Plays a role in ozone tolerance. The sequence is that of Glutathione S-transferase DHAR2 (DHAR2) from Arabidopsis thaliana (Mouse-ear cress).